A 302-amino-acid polypeptide reads, in one-letter code: Aspartate carbamoyltransferase catalytic subunit (302 aa).

Carbamoyl phosphate is bound by residues Arg55 and Thr56. Position 83 (Lys83) interacts with L-aspartate. Residues Arg105, His133, and Gln136 each contribute to the carbamoyl phosphate site. L-aspartate is bound by residues Arg166 and Arg222. Carbamoyl phosphate is bound by residues Gly262 and Pro263.

It belongs to the aspartate/ornithine carbamoyltransferase superfamily. ATCase family. Heterododecamer (2C3:3R2) of six catalytic PyrB chains organized as two trimers (C3), and six regulatory PyrI chains organized as three dimers (R2).

It carries out the reaction carbamoyl phosphate + L-aspartate = N-carbamoyl-L-aspartate + phosphate + H(+). The protein operates within pyrimidine metabolism; UMP biosynthesis via de novo pathway; (S)-dihydroorotate from bicarbonate: step 2/3. In terms of biological role, catalyzes the condensation of carbamoyl phosphate and aspartate to form carbamoyl aspartate and inorganic phosphate, the committed step in the de novo pyrimidine nucleotide biosynthesis pathway. This Solibacter usitatus (strain Ellin6076) protein is Aspartate carbamoyltransferase catalytic subunit.